We begin with the raw amino-acid sequence, 529 residues long: Auxin response factor 13 (529 aa).

Residues 1–22 form a disordered region; sequence MARPPAATAPPPPPPPPPPPPP. Over residues 7 to 22 the composition is skewed to pro residues; the sequence is ATAPPPPPPPPPPPPP. Residues 128–234 constitute a DNA-binding region (TF-B3); the sequence is YAKQLTQSDA…KLLVGVRRAA (107 aa). 2 disordered regions span residues 443-462 and 497-529; these read IVTP…PLSA and PEGV…GARL. Residues 444–461 show a composition bias toward polar residues; it reads VTPQNGSPPDNPVNTPLS. A compositionally biased stretch (acidic residues) spans 499–510; sequence GVDDETATEEAS. The span at 511 to 523 shows a compositional bias: polar residues; that stretch reads DTSLPDSLTNGHN.

The protein belongs to the ARF family. Homo and heterodimers. Expressed in roots, culms, leaves and young panicles.

The protein resides in the nucleus. Functionally, auxin response factors (ARFs) are transcriptional factors that bind specifically to the DNA sequence 5'-TGTCTC-3' found in the auxin-responsive promoter elements (AuxREs). The protein is Auxin response factor 13 (ARF13) of Oryza sativa subsp. japonica (Rice).